The chain runs to 274 residues: 2,3,4,5-tetrahydropyridine-2,6-dicarboxylate N-succinyltransferase (274 aa).

Substrate contacts are provided by R107 and D144.

This sequence belongs to the transferase hexapeptide repeat family. As to quaternary structure, homotrimer.

It localises to the cytoplasm. The enzyme catalyses (S)-2,3,4,5-tetrahydrodipicolinate + succinyl-CoA + H2O = (S)-2-succinylamino-6-oxoheptanedioate + CoA. The protein operates within amino-acid biosynthesis; L-lysine biosynthesis via DAP pathway; LL-2,6-diaminopimelate from (S)-tetrahydrodipicolinate (succinylase route): step 1/3. This Cereibacter sphaeroides (strain ATCC 17023 / DSM 158 / JCM 6121 / CCUG 31486 / LMG 2827 / NBRC 12203 / NCIMB 8253 / ATH 2.4.1.) (Rhodobacter sphaeroides) protein is 2,3,4,5-tetrahydropyridine-2,6-dicarboxylate N-succinyltransferase.